The sequence spans 453 residues: Tryptophan biosynthesis protein TrpCF (453 aa).

An indole-3-glycerol phosphate synthase region spans residues 1-257 (MMQTVLAKIV…AAVRRVLLGE (257 aa)). The N-(5'-phosphoribosyl)anthranilate isomerase stretch occupies residues 258-453 (NKVCGLTRGQ…ASVFQTLRAY (196 aa)).

The protein in the N-terminal section; belongs to the TrpC family. In the C-terminal section; belongs to the TrpF family. As to quaternary structure, monomer.

It carries out the reaction N-(5-phospho-beta-D-ribosyl)anthranilate = 1-(2-carboxyphenylamino)-1-deoxy-D-ribulose 5-phosphate. The catalysed reaction is 1-(2-carboxyphenylamino)-1-deoxy-D-ribulose 5-phosphate + H(+) = (1S,2R)-1-C-(indol-3-yl)glycerol 3-phosphate + CO2 + H2O. The protein operates within amino-acid biosynthesis; L-tryptophan biosynthesis; L-tryptophan from chorismate: step 3/5. Its pathway is amino-acid biosynthesis; L-tryptophan biosynthesis; L-tryptophan from chorismate: step 4/5. Functionally, bifunctional enzyme that catalyzes two sequential steps of tryptophan biosynthetic pathway. The first reaction is catalyzed by the isomerase, coded by the TrpF domain; the second reaction is catalyzed by the synthase, coded by the TrpC domain. The sequence is that of Tryptophan biosynthesis protein TrpCF (trpC) from Escherichia coli O157:H7.